Reading from the N-terminus, the 266-residue chain is Large ribosomal subunit protein uL4 (266 aa).

The protein belongs to the universal ribosomal protein uL4 family. Part of the 50S ribosomal subunit.

Functionally, one of the primary rRNA binding proteins, this protein initially binds near the 5'-end of the 23S rRNA. It is important during the early stages of 50S assembly. It makes multiple contacts with different domains of the 23S rRNA in the assembled 50S subunit and ribosome. Its function is as follows. Forms part of the polypeptide exit tunnel. This chain is Large ribosomal subunit protein uL4, found in Sulfurisphaera tokodaii (strain DSM 16993 / JCM 10545 / NBRC 100140 / 7) (Sulfolobus tokodaii).